Reading from the N-terminus, the 122-residue chain is Small ribosomal subunit protein uS13 (122 aa).

Residues 92–122 (HRMGLPVRGQRTKTNARTRKGPSKPVSGKKK) form a disordered region. Over residues 101–122 (QRTKTNARTRKGPSKPVSGKKK) the composition is skewed to basic residues.

Belongs to the universal ribosomal protein uS13 family. In terms of assembly, part of the 30S ribosomal subunit. Forms a loose heterodimer with protein S19. Forms two bridges to the 50S subunit in the 70S ribosome.

Located at the top of the head of the 30S subunit, it contacts several helices of the 16S rRNA. In the 70S ribosome it contacts the 23S rRNA (bridge B1a) and protein L5 of the 50S subunit (bridge B1b), connecting the 2 subunits; these bridges are implicated in subunit movement. Contacts the tRNAs in the A and P-sites. The sequence is that of Small ribosomal subunit protein uS13 from Ruminiclostridium cellulolyticum (strain ATCC 35319 / DSM 5812 / JCM 6584 / H10) (Clostridium cellulolyticum).